Here is a 498-residue protein sequence, read N- to C-terminus: Probable malate:quinone oxidoreductase 2 (498 aa).

This sequence belongs to the MQO family. The cofactor is FAD.

The catalysed reaction is (S)-malate + a quinone = a quinol + oxaloacetate. The protein operates within carbohydrate metabolism; tricarboxylic acid cycle; oxaloacetate from (S)-malate (quinone route): step 1/1. The chain is Probable malate:quinone oxidoreductase 2 from Staphylococcus aureus (strain MW2).